The sequence spans 202 residues: 3-isopropylmalate dehydratase small subunit (202 aa).

This sequence belongs to the LeuD family. LeuD type 1 subfamily. Heterodimer of LeuC and LeuD.

It catalyses the reaction (2R,3S)-3-isopropylmalate = (2S)-2-isopropylmalate. It participates in amino-acid biosynthesis; L-leucine biosynthesis; L-leucine from 3-methyl-2-oxobutanoate: step 2/4. Its function is as follows. Catalyzes the isomerization between 2-isopropylmalate and 3-isopropylmalate, via the formation of 2-isopropylmaleate. This chain is 3-isopropylmalate dehydratase small subunit, found in Rhizobium etli (strain ATCC 51251 / DSM 11541 / JCM 21823 / NBRC 15573 / CFN 42).